Consider the following 524-residue polypeptide: GMP synthase [glutamine-hydrolyzing] (524 aa).

One can recognise a Glutamine amidotransferase type-1 domain in the interval 5–195; sequence KVIVIDFGGQ…VRGVCGCAGT (191 aa). Cysteine 82 acts as the Nucleophile in catalysis. Residues histidine 169 and glutamate 171 contribute to the active site. Positions 196-389 constitute a GMPS ATP-PPase domain; that stretch reads WKMDAFVENT…LGIPEHLVFR (194 aa). Residue 223-229 participates in ATP binding; the sequence is SGGVDSS.

As to quaternary structure, homodimer.

The catalysed reaction is XMP + L-glutamine + ATP + H2O = GMP + L-glutamate + AMP + diphosphate + 2 H(+). It participates in purine metabolism; GMP biosynthesis; GMP from XMP (L-Gln route): step 1/1. Its function is as follows. Catalyzes the synthesis of GMP from XMP. This chain is GMP synthase [glutamine-hydrolyzing], found in Lachnospira eligens (strain ATCC 27750 / DSM 3376 / VPI C15-48 / C15-B4) (Eubacterium eligens).